A 718-amino-acid chain; its full sequence is Potassium channel KAT1 (718 aa).

Topologically, residues 1 to 60 (MTQAHSKSCFHQFWDGLQIKRSSDSFTVELLPSLGATINHSNKLQKFIISPYDPRYRSWE) are cytoplasmic. Residues 61–81 (LFLIVLVVYSAWICPFELAFL) traverse the membrane as a helical segment. The Extracellular portion of the chain corresponds to 82-88 (RDLPSKL). Residues 89 to 109 (LLVENIVDIFFAIDIVLTFFV) form a helical membrane-spanning segment. At 110–132 (AYVDSKTHLLVDDRKRIAMRYLS) the chain is on the cytoplasmic side. A helical membrane pass occupies residues 133–153 (TWFIFDVCSTAPFQPIILLFT). Residues 154 to 162 (HKGNDIAFK) are Extracellular-facing. Residues 163 to 183 (VLNLLRLWRLHRVSSLFARLE) traverse the membrane as a helical; Voltage-sensor segment. Residues 184-197 (KDIRFNYFWTRCSK) lie on the Cytoplasmic side of the membrane. Residues 198-218 (LISVTLFAVHCAGCFNYMIAD) traverse the membrane as a helical segment. Residues 219–245 (RYPNPEKTWIGAVMSTFRSESLWTRYI) are Extracellular-facing. Positions 246–265 (TALYWSITTLTTTGYGDLHA) form an intramembrane region, pore-forming. The Extracellular portion of the chain corresponds to 266 to 269 (ENPT). Residues 270-290 (EMLFDIVYMMFNLGLTAYLIG) traverse the membrane as a helical segment. Topologically, residues 291 to 718 (NMTNLVVHGT…DGDHLFLLEM (428 aa)) are cytoplasmic. 374 to 493 (LFNGVSGNFI…NILMNNLVQK (120 aa)) provides a ligand contact to a nucleoside 3',5'-cyclic phosphate. The interval 560 to 584 (EATRSSASENENSSMTDKEENHDEV) is disordered. Residues 562-574 (TRSSASENENSSM) show a composition bias toward polar residues. Basic and acidic residues predominate over residues 575–584 (TDKEENHDEV). One can recognise a KHA domain in the interval 647 to 718 (RVTIHKYRHN…DGDHLFLLEM (72 aa)).

Belongs to the potassium channel family. Plant (TC 1.A.1.4) subfamily.

It localises to the membrane. Probable inward-rectifying potassium channel. Assuming opened or closed conformations in response to the voltage difference across the membrane, the channel is activated by hyperpolarization. The sequence is that of Potassium channel KAT1 from Oryza sativa subsp. japonica (Rice).